The sequence spans 325 residues: Tetraacyldisaccharide 4'-kinase (325 aa).

53–60 (SVGGNGKT) serves as a coordination point for ATP.

It belongs to the LpxK family.

The catalysed reaction is a lipid A disaccharide + ATP = a lipid IVA + ADP + H(+). It participates in glycolipid biosynthesis; lipid IV(A) biosynthesis; lipid IV(A) from (3R)-3-hydroxytetradecanoyl-[acyl-carrier-protein] and UDP-N-acetyl-alpha-D-glucosamine: step 6/6. In terms of biological role, transfers the gamma-phosphate of ATP to the 4'-position of a tetraacyldisaccharide 1-phosphate intermediate (termed DS-1-P) to form tetraacyldisaccharide 1,4'-bis-phosphate (lipid IVA). In Mannheimia succiniciproducens (strain KCTC 0769BP / MBEL55E), this protein is Tetraacyldisaccharide 4'-kinase.